We begin with the raw amino-acid sequence, 312 residues long: MKNHTVIRTFILLGLTGDPHLQVLLFIFLFLTYMLSVTGNLTIITLTLVDHHLKTPMYFFLRNFSFLEVSFTTVCIPRFLYNISMGDNTITYNACASQIFFVILFGATEFFLLAAMSYDRYVAICKPLHYVVIMNNRVCTLLVLCCWVAGLMIIVPPLSLGLQLEFCDSNAIDHFSCDAGPLLKISCSDTWVIEQMVILMAVFALIITLVCVILSYLYIVRTILKFPSVQQRKKAFSTCSSHMIVVSIAYGSCIFIYIKPSAKDEVAINKGVSVLTTSVAPLLNPFIYTLRNKQVKQAFSDSIKRIAFLSKK.

The Extracellular segment spans residues 1-23 (MKNHTVIRTFILLGLTGDPHLQV). Asn3 carries N-linked (GlcNAc...) asparagine glycosylation. Residues 24 to 44 (LLFIFLFLTYMLSVTGNLTII) traverse the membrane as a helical segment. The Cytoplasmic portion of the chain corresponds to 45–52 (TLTLVDHH). Residues 53 to 73 (LKTPMYFFLRNFSFLEVSFTT) traverse the membrane as a helical segment. The Extracellular segment spans residues 74 to 97 (VCIPRFLYNISMGDNTITYNACAS). Residue Asn82 is glycosylated (N-linked (GlcNAc...) asparagine). An intrachain disulfide couples Cys95 to Cys187. The helical transmembrane segment at 98–118 (QIFFVILFGATEFFLLAAMSY) threads the bilayer. At 119–137 (DRYVAICKPLHYVVIMNNR) the chain is on the cytoplasmic side. The helical transmembrane segment at 138-158 (VCTLLVLCCWVAGLMIIVPPL) threads the bilayer. The Extracellular segment spans residues 159 to 195 (SLGLQLEFCDSNAIDHFSCDAGPLLKISCSDTWVIEQ). Residues 196–215 (MVILMAVFALIITLVCVILS) traverse the membrane as a helical segment. Topologically, residues 216–235 (YLYIVRTILKFPSVQQRKKA) are cytoplasmic. Residues 236 to 256 (FSTCSSHMIVVSIAYGSCIFI) form a helical membrane-spanning segment. Over 257–269 (YIKPSAKDEVAIN) the chain is Extracellular. A helical membrane pass occupies residues 270 to 290 (KGVSVLTTSVAPLLNPFIYTL). At 291-312 (RNKQVKQAFSDSIKRIAFLSKK) the chain is on the cytoplasmic side.

This sequence belongs to the G-protein coupled receptor 1 family.

The protein localises to the cell membrane. Odorant receptor. This chain is Olfactory receptor 6C2 (OR6C2), found in Homo sapiens (Human).